Here is a 1331-residue protein sequence, read N- to C-terminus: MVEPSEKPNTQNDDVSKQEIRNPVSSSSSTSDKEKVAKKGNSDATKSLTPEDLDAQLAHLPEHEREILKQQLFIPEVKATYGTLFRYATRNDMILLAIVSLASIAAGAALPLFTVLFGSLAGTFRDIALHRITYDEFNSILTRNSLYFVYLGIAQFILLYVSTVGFIYVGEHITQKIRARYLHAILRQNIGFFDKLGAGEVTTRITADTNLIQDGISEKVGLTLTALSTFFSAFIIGYVRYWKLALICTSTIVAMVLVMGGISRFVVKSGRMTLVSYGEGGTVAEEVISSIRNATAFGTQEKLARQYEVHLREARKWGRRLQMMLGIMFGSMMAIMYSNYGLGFWMGSRFLVGGETDLSAIVNILLAIVIGSFSIGNVAPNTQAFASAISAGAKIFSTIDRVSAIDPGSDEGDTIENVEGTIEFRGIKHIYPSRPEVVVMEDINLVVPKGKTTALVGPSGSGKSTVVGLLERFYNPVAGSVFLDGRDIKTLNLRWLRQQISLVSQEPTLFGTTIFENIRLGLIGSPMENESEEQIKERIVSAAKEANAHDFVMGLPDGYATDVGQRGFLLSGGQKQRIAIARAIVSDPKILLLDEATSALDTKSEGVVQAALDAASRGRTTIVIAHRLSTIKSADNIVVIVGGRIAEQGTHDELVDKKGTYLQLVEAQKINEERGEESEDEAVLEKEKEISRQISVPAKSVNSGKYPDEDVEANLGRIDTKKSLSSVILSQKRGQEKETEYSLGTLIRFIAGFNKPERLIMLCGFFFAVLSGAGQPVQSVFFAKGITTLSLPPSLYGKLREDANFWSLMFLMLGLVQLITQSAQGVIFALCSESLIYRARSKSFRAMLRQDIAFFDLSENSTGALTSFLSTETKHLSGVSGATLGTILMVSTTLIVALTVALAFGWKLALVCISTVPVLLLCGFYRFWILAQFQTRAKKAYESSASYACEATSSIRTVASLTRENGVMEIYEGQLNDQAKKSLRSVAKSSLLYAASQSFSFFCLALGFWYGGGLLGKGEYNAFQFFLCISCVIFGSQSAGIVFSFSPDMGKAKSAAADFKRLFDRVPTIDIESPDGEKLETVEGTIEFRDVHFRYPTRPEQPVLRGLNLTVKPGQYIALVGPSGCGKSTTIALVERFYDTLSGGVYIDGKDISRLNVNSYRSHLALVSQEPTLYQGTIRDNVLLGVDRDDVPDEQVFAACKAANIYDFIMSLPDGFATVVGSKGSMLSGGQKQRIAIARALIRDPKVLLLDEATSALDSESEKVVQAALDAAAKGRTTIAVAHRLSTIQKADIIYVFDQGRIVESGTHHELLQNKGRYYELVHMQSLEKTH.

Residues 1–50 (MVEPSEKPNTQNDDVSKQEIRNPVSSSSSTSDKEKVAKKGNSDATKSLTP) form a disordered region. Residues 31–41 (SDKEKVAKKGN) are compositionally biased toward basic and acidic residues. Helical transmembrane passes span 93–113 (MILL…LPLF), 147–167 (YFVY…VGFI), 219–239 (KVGL…IGYV), and 242–262 (WKLA…MGGI). The 291-residue stretch at 97–387 (AIVSLASIAA…VAPNTQAFAS (291 aa)) folds into the ABC transmembrane type-1 1 domain. Asn-293 carries an N-linked (GlcNAc...) asparagine glycan. The next 2 membrane-spanning stretches (helical) occupy residues 325-345 (LGIM…LGFW) and 358-378 (LSAI…IGNV). One can recognise an ABC transporter 1 domain in the interval 422-667 (IEFRGIKHIY…KGTYLQLVEA (246 aa)). 457–464 (GPSGSGKS) is a binding site for ATP. N-linked (GlcNAc...) asparagine glycosylation is present at Asn-529. 2 helical membrane passes run 762-782 (LCGF…SVFF) and 808-828 (LMFL…GVIF). An ABC transmembrane type-1 2 domain is found at 764–1051 (GFFFAVLSGA…VFSFSPDMGK (288 aa)). Asn-860 carries an N-linked (GlcNAc...) asparagine glycan. The next 4 membrane-spanning stretches (helical) occupy residues 884–904 (LGTI…ALAF), 910–930 (LVCI…FWIL), 995–1015 (ASQS…GGLL), and 1025–1045 (FFLC…VFSF). Residues 1086–1324 (IEFRDVHFRY…KGRYYELVHM (239 aa)) form the ABC transporter 2 domain. The N-linked (GlcNAc...) asparagine glycan is linked to Asn-1108. Position 1121–1128 (1121–1128 (GPSGCGKS)) interacts with ATP.

This sequence belongs to the ABC transporter superfamily. ABCB family. Multidrug resistance exporter (TC 3.A.1.201) subfamily.

Its subcellular location is the cell membrane. The catalysed reaction is itraconazole(in) + ATP + H2O = itraconazole(out) + ADP + phosphate + H(+). ABC-type efflux transporter involved in the modulation susceptibility to itraconazole. The sequence is that of ABC multidrug transporter MDR2 from Trichophyton rubrum (strain ATCC MYA-4607 / CBS 118892) (Athlete's foot fungus).